A 2850-amino-acid polypeptide reads, in one-letter code: Hornerin (2850 aa).

The segment at 1 to 81 (MPKLLQGVIT…TEYLLMIFKL (81 aa)) is S-100-like. EF-hand domains are found at residues 13–48 (DVFY…LKNP) and 49–84 (NDPD…LVQA). Residues Thr27, Glu32, Asp62, Asp64, Asn66, Lys68, and Glu73 each contribute to the Ca(2+) site. 13 consecutive repeat copies span residues 97-187 (SGSK…SDSH), 188-278 (QSSG…SSSG), 279-369 (SSSS…SGSG), 370-460 (HSSS…SGSG), 474-566 (HSSG…YGSG), 593-683 (QSSG…SGSG), 685-747 (SSSN…SSSG), 748-836 (LSSS…SASG), 839-875 (SSQG…SASH), 876-965 (HASG…SRSG), 966-1004 (QSSR…SGSG), 1007-1097 (PSPS…ASSG), and 1098-1188 (QSSS…SGSG). A compositionally biased stretch (basic and acidic residues) spans 100–110 (KLRDDTHQHQE). 2 disordered regions span residues 100 to 154 (KLRD…GTES) and 166 to 2817 (SGQH…KGGS). The segment covering 125–144 (SSFSHSSWSAGENDSYSRNV) has biased composition (polar residues). 2 stretches are compositionally biased toward low complexity: residues 167–192 (GQHN…SSGR) and 226–248 (GQSS…SQHG). Over residues 249–259 (SGSGHSSGYGQ) the composition is skewed to gly residues. 2 stretches are compositionally biased toward low complexity: residues 276–308 (SSGS…QSPS) and 317–421 (GHSS…SGSG). Residues 422 to 433 (QSPGHGQRGSGS) are compositionally biased toward gly residues. 2 stretches are compositionally biased toward low complexity: residues 449 to 465 (SSSS…SSGF) and 473 to 482 (EHSSGYTQHG). Gly residues predominate over residues 483–493 (SGSGHSSGHGQ). Composition is skewed to low complexity over residues 494–529 (HGSR…QSLG), 555–661 (SSSY…QSPS), 670–724 (GHSS…SHSS), 732–765 (RSGQ…SSGH), 782–806 (GSSS…SCGH), and 818–871 (GQHE…GQHE). Residues Ser659 and Ser661 each carry the phosphoserine modification. Positions 884 to 900 (GSGSGQSPGHGQRGSGS) are enriched in gly residues. Phosphoserine is present on Ser890. 2 stretches are compositionally biased toward low complexity: residues 901-921 (GQSP…SSGR) and 931-996 (GFGH…SLGH). Phosphoserine is present on residues Ser993 and Ser1008. 2 stretches are compositionally biased toward low complexity: residues 1019–1050 (GQSS…SSGL) and 1057–1115 (SGQS…SSGY). Residues 1116–1132 (GRQGSGSGQSPGHGQRG) show a composition bias toward gly residues. Composition is skewed to low complexity over residues 1133–1156 (SGSR…SSGQ) and 1166–1184 (GFGH…SQHG). Over residues 1185–1195 (SGSGHSSGYGQ) the composition is skewed to gly residues. An Omega-N-methylarginine modification is found at Arg1205. Low complexity-rich tracts occupy residues 1211–1232 (SSSG…SSGH) and 1253–1276 (GHSS…PYES). Residues 1215-1305 (SSSHYGQHGS…AYSQHGSGSG (91 aa)) form repeat 14. Positions 1280-1301 (HSSVFGQHESGSGHSSAYSQHG) are enriched in polar residues. 5 stretches are compositionally biased toward low complexity: residues 1309–1322 (SQGQ…QSST), 1331–1349 (GQSS…SSGY), 1370–1390 (GHSS…SSGR), 1400–1438 (GFGH…GQSS), and 1445–1466 (SSSG…SLGH). A run of 16 repeats spans residues 1332–1422 (QSSS…SGSG), 1423–1474 (HSSS…SGSG), 1477–1567 (PSPS…ASSG), 1568–1658 (QSSS…SGSG), 1685–1775 (SSSR…SGSG), 1802–1892 (QSSS…SGSG), 1893–1944 (HSSS…SGSG), 1947–2037 (PSPS…ASSG), 2038–2128 (QSSS…SGSG), 2155–2245 (SSSR…SGSG), 2272–2362 (QSSS…SGSG), 2363–2414 (HSSS…SGSG), 2417–2507 (PSPS…ASSG), 2508–2598 (QSSS…SGSG), 2625–2715 (SSSH…SGSG), and 2716–2806 (HFCS…SGSG). Residues Ser1463 and Ser1478 each carry the phosphoserine modification. Low complexity-rich tracts occupy residues 1489 to 1520 (GQSS…SSGL) and 1527 to 1585 (SGQS…SSGY). Residues 1586 to 1602 (GRQGSGSGQSPGHGQRG) are compositionally biased toward gly residues. Low complexity-rich tracts occupy residues 1603 to 1626 (SGSR…SSGQ) and 1636 to 1654 (GFGH…SQHG). The segment covering 1655-1665 (SGSGHSSGYGQ) has biased composition (gly residues). Over residues 1682–1702 (SSRSSSRYGQHGSGSRQSSGH) the composition is skewed to low complexity. Ser1712 and Ser1714 each carry phosphoserine. Residues 1723 to 1746 (GHSSSHGQHGSGSGRSSSRGPYES) are compositionally biased toward low complexity. Residues 1750–1771 (HSSVFGQHESGSGHSSAYSQHG) are compositionally biased toward polar residues. 3 stretches are compositionally biased toward low complexity: residues 1779–1831 (SQGQ…QSPS), 1840–1860 (GHSS…SSGR), and 1870–1936 (GFGH…SLGH). 2 positions are modified to phosphoserine: Ser1829 and Ser1831. Ser1933 and Ser1948 each carry phosphoserine. Low complexity-rich tracts occupy residues 1959-1990 (GQSS…SSGL) and 1997-2055 (SGQS…SSGY). Over residues 2056 to 2072 (GRQGSGSGQSPGHGQRG) the composition is skewed to gly residues. Composition is skewed to low complexity over residues 2073–2096 (SGSR…SSGQ) and 2106–2124 (GFGH…SQHG). Residues 2125 to 2135 (SGSGHSSGYGQ) are compositionally biased toward gly residues. Composition is skewed to low complexity over residues 2151–2172 (SSSG…SSGH) and 2193–2216 (GHSS…PYES). The span at 2220-2241 (HSSVFGQHESGSGHSSAYSQHG) shows a compositional bias: polar residues. Composition is skewed to low complexity over residues 2249–2301 (SQGQ…QSPS), 2310–2330 (GHSS…SSGR), 2340–2378 (GFGH…GQSS), and 2385–2406 (SSSG…SLGH). Phosphoserine is present on residues Ser2299 and Ser2301. Phosphoserine occurs at positions 2403 and 2418. 2 stretches are compositionally biased toward low complexity: residues 2429–2460 (GQSS…SSGL) and 2467–2525 (SGQS…SSGY). The segment covering 2526-2542 (GRQGSGSGQSPGHGQRG) has biased composition (gly residues). 2 stretches are compositionally biased toward low complexity: residues 2543–2566 (SGSR…SSGQ) and 2576–2594 (GFGH…SQHG). The span at 2595 to 2605 (SGSGHSSGYGQ) shows a compositional bias: gly residues. A compositionally biased stretch (low complexity) spans 2621 to 2642 (SSSGSSSHYGQHGSGSRQSSGH). Residues Ser2652 and Ser2654 each carry the phosphoserine modification. Positions 2663-2682 (GHSSSHGQHGSGSGRSSSRG) are enriched in low complexity. Residues 2698–2711 (ESGSGHSSAYSQHG) are compositionally biased toward polar residues. Composition is skewed to low complexity over residues 2719–2732 (SQGQ…QSST), 2741–2759 (GQSS…SSGY), and 2795–2816 (SSGY…CKGG).

Belongs to the S100-fused protein family. The protein in the N-terminal section; belongs to the S-100 family. Processed during the process of epidermal differentiation. Post-translationally, forms covalent cross-links mediated by transglutaminase TGM3, between glutamine and the epsilon-amino group of lysine residues (in vitro). In terms of tissue distribution, expressed in cornified epidermis, psoriatic and regenerating skin after wounding. Found in the upper granular layer and in the entire cornified layer of epidermis.

It is found in the cytoplasmic granule. Its function is as follows. Component of the epidermal cornified cell envelopes. This chain is Hornerin (HRNR), found in Homo sapiens (Human).